The following is a 110-amino-acid chain: UPF0122 protein lwe1821 (110 aa).

The protein belongs to the UPF0122 family.

Functionally, might take part in the signal recognition particle (SRP) pathway. This is inferred from the conservation of its genetic proximity to ftsY/ffh. May be a regulatory protein. In Listeria welshimeri serovar 6b (strain ATCC 35897 / DSM 20650 / CCUG 15529 / CIP 8149 / NCTC 11857 / SLCC 5334 / V8), this protein is UPF0122 protein lwe1821.